The sequence spans 295 residues: Ribosomal protein L11 methyltransferase (295 aa).

Positions 146, 167, 189, and 231 each coordinate S-adenosyl-L-methionine.

It belongs to the methyltransferase superfamily. PrmA family.

It is found in the cytoplasm. The catalysed reaction is L-lysyl-[protein] + 3 S-adenosyl-L-methionine = N(6),N(6),N(6)-trimethyl-L-lysyl-[protein] + 3 S-adenosyl-L-homocysteine + 3 H(+). Methylates ribosomal protein L11. The sequence is that of Ribosomal protein L11 methyltransferase from Vibrio campbellii (strain ATCC BAA-1116).